The primary structure comprises 188 residues: Elongation factor P (188 aa).

It belongs to the elongation factor P family.

Its subcellular location is the cytoplasm. It functions in the pathway protein biosynthesis; polypeptide chain elongation. In terms of biological role, involved in peptide bond synthesis. Stimulates efficient translation and peptide-bond synthesis on native or reconstituted 70S ribosomes in vitro. Probably functions indirectly by altering the affinity of the ribosome for aminoacyl-tRNA, thus increasing their reactivity as acceptors for peptidyl transferase. This Paramagnetospirillum magneticum (strain ATCC 700264 / AMB-1) (Magnetospirillum magneticum) protein is Elongation factor P.